Consider the following 75-residue polypeptide: Putative antitoxin VapB29 (75 aa).

Its function is as follows. Possibly the antitoxic component of a type II toxin-antitoxin (TA) system. Its cognate toxin is VapC29 (Potential). The protein is Putative antitoxin VapB29 (vapB29) of Mycobacterium tuberculosis (strain CDC 1551 / Oshkosh).